The chain runs to 209 residues: SelT-like protein (209 aa).

A signal peptide spans 1–22; that stretch reads MDKTQLILLGLPIFLLCSDLFN. Cys64 and Cys67 form a disulfide bridge.

It belongs to the SelWTH family. SELT subfamily.

In Arabidopsis thaliana (Mouse-ear cress), this protein is SelT-like protein.